The primary structure comprises 943 residues: Netrin receptor UNC5B-a (943 aa).

The N-terminal stretch at 1–30 (MYLSRNPSGAALAAILVALILSCNFPSSTA) is a signal peptide. Topologically, residues 31 to 380 (GIEYSDVLPD…LESTGDVALY (350 aa)) are extracellular. Residues 51–148 (PHFLLEPEDA…AGTTKSKRSY (98 aa)) form the Ig-like domain. 9 disulfides stabilise this stretch: C72-C133, C84-C131, C177-C228, C261-C298, C265-C302, C276-C288, C317-C351, C321-C356, and C329-C341. Residues 150-245 (RIAYLRKNFD…KRRSTTATVI (96 aa)) enclose the Ig-like C2-type domain. N225 is a glycosylation site (N-linked (GlcNAc...) asparagine). TSP type-1 domains follow at residues 249-303 (NGGW…TMCP) and 305-357 (DGGW…GLCM). The N-linked (GlcNAc...) asparagine glycan is linked to N350. Residues 381–401 (AGLVVAIFIVIILLMAVGIVV) traverse the membrane as a helical segment. Topologically, residues 402–943 (YRRNCREFDT…MLVMATDGDC (542 aa)) are cytoplasmic. The region spanning 542–685 (NSVTGTFGSL…LGTYAFVGES (144 aa)) is the ZU5 domain. The interval 688 to 836 (RSAIKRLQLA…LEENVKSFDP (149 aa)) is UPA domain. Positions 863-941 (KICNSLDAPN…EMMLVMATDG (79 aa)) constitute a Death domain.

It belongs to the unc-5 family. As to quaternary structure, interacts (via extracellular domain) with flrt3 (via extracellular domain). Interacts with rnd1. Post-translationally, phosphorylated on cytoplasmic tyrosine residues. As to expression, in the developing visual system, it is expressed within the developing optic vesicles and later become restricted to the dorsal ciliary marginal zone, a site of retinoblast proliferation and differentiation.

It is found in the cell membrane. In terms of biological role, plays a role in cell-cell adhesion during embryonic development. Receptor for netrin required for axon guidance. Mediates axon repulsion of neuronal growth cones in the developing nervous system upon ligand binding. The sequence is that of Netrin receptor UNC5B-a (unc5b-a) from Xenopus laevis (African clawed frog).